Reading from the N-terminus, the 119-residue chain is Ribonuclease P protein component (119 aa).

The protein belongs to the RnpA family. As to quaternary structure, consists of a catalytic RNA component (M1 or rnpB) and a protein subunit.

The enzyme catalyses Endonucleolytic cleavage of RNA, removing 5'-extranucleotides from tRNA precursor.. RNaseP catalyzes the removal of the 5'-leader sequence from pre-tRNA to produce the mature 5'-terminus. It can also cleave other RNA substrates such as 4.5S RNA. The protein component plays an auxiliary but essential role in vivo by binding to the 5'-leader sequence and broadening the substrate specificity of the ribozyme. The sequence is that of Ribonuclease P protein component from Streptococcus pyogenes serotype M1.